The primary structure comprises 465 residues: MKIIVSRGLDLSLKGAPKESGFCGKVDPAFVSVDLRPFAPLPLGVKVSPGDQITAGSPLAEYKSFPGVFITSSVDGEVIEIRRGSKRALLDIVIKKKPGVSQTKFSYDLHALSQKELLEVFKKEGLFTLFKQRPFNIPALPTQSPRDVFINLADNRPFTPSVEKHLSLFSSKEDGYYIFVVGVQAIAKLFGLKPHIVSTDRLSLPTQDLISVAHLHTIAGPYPSGSPSTHIHHIARIRNDRDIVFTISFQEVLSIGHLFLKGFFLGQQVVALAGSALPPSQRKYLITAKGASFKDLLPQEIFSSNDVSLISGDPLTGRLCNKEENPCLGMRDHTITILPNPKTREMFSFLRLGWNKLTVTRTYLSGFFKRKRVFMDMNTNLHGEKRPIIDSEIYEKVSAIAVPVAPLIKALETQNFEEACRLGLLEVSPEDFALPTFIDPSKTEMFAIVKEALIRYAKENVLTPL.

Belongs to the NqrA family. As to quaternary structure, composed of six subunits; NqrA, NqrB, NqrC, NqrD, NqrE and NqrF.

The enzyme catalyses a ubiquinone + n Na(+)(in) + NADH + H(+) = a ubiquinol + n Na(+)(out) + NAD(+). Functionally, NQR complex catalyzes the reduction of ubiquinone-1 to ubiquinol by two successive reactions, coupled with the transport of Na(+) ions from the cytoplasm to the periplasm. NqrA to NqrE are probably involved in the second step, the conversion of ubisemiquinone to ubiquinol. In Chlamydia muridarum (strain MoPn / Nigg), this protein is Na(+)-translocating NADH-quinone reductase subunit A.